The primary structure comprises 739 residues: Nucleoprotein (739 aa).

The stretch at Val-334 to Leu-363 forms a coiled coil. 2 disordered regions span residues Arg-414–Asp-475 and Asp-493–Gln-641. The segment covering Ser-531 to Gln-546 has biased composition (polar residues). A compositionally biased stretch (acidic residues) spans Thr-570–Pro-579. Residues Ala-614 to Ser-624 show a composition bias toward basic and acidic residues. Residues Asn-625–Asn-634 are compositionally biased toward polar residues.

This sequence belongs to the filoviruses nucleoprotein family. Homooligomer. Homomultimerizes to form the nucleocapsid. Binds to viral genomic RNA. Interacts with VP35 and VP30 to form the nucleocapsid. Interacts with host PPP2R5C; this interaction leads to VP30 dephosphorylation and viral transcription. Interacts with VP24; this interaction facilitates nucleocapsid assembly and genome packaging. Interacts with matrix protein VP40; this interaction allows recruitment of the nucleocapsid into progeny virions. Interacts with host STAU1. Interacts with host NXF1 (via RNA-binding domain); this interaction recruits NXF1 to the inclusion bodies were viral replication takes place, probably to export viral mRNA-NXF1 complexes from these sites. Interacts with host CCDC92; this interaction sequesters NP in the host cytoplasm. Interacts with host TRIM14. Phosphorylated and O-glycosylated by host. Acetylated by host EP300 in vitro.

It localises to the virion. The protein resides in the host cytoplasm. Oligomerizes into helical capsid to encapsidate the viral genome, protecting it from nucleases and the cellular innate immune response. VP35 binds to and stabilizes monomeric NP, keeping it soluble. Upon virus replication, NP is recruited to bind cooperatively viral genomic RNA and VP35 is released. The encapsidated genomic RNA is termed the nucleocapsid and serves as template for transcription and replication. The nucleocapsid is helical with a pitch of 10.81 NP per turn and a diameter of about 22nm. Each NP binds to six nucleotides of viral genomic RNA, three being exposed to the solvant and three hidden into the nucleocapsid. Also recruits host PPP2R5C phosphatase to dephosphorylate VP30 and thereby promote viral transcription. Upon virion assembly and budding, NP binds to VP24 and possibly host STAU1. The sequence is that of Nucleoprotein (NP) from Reston ebolavirus (strain Reston-89) (REBOV).